The sequence spans 274 residues: Elongation factor Ts (274 aa).

The interval 76–79 (TDFV) is involved in Mg(2+) ion dislocation from EF-Tu.

It belongs to the EF-Ts family.

The protein localises to the cytoplasm. In terms of biological role, associates with the EF-Tu.GDP complex and induces the exchange of GDP to GTP. It remains bound to the aminoacyl-tRNA.EF-Tu.GTP complex up to the GTP hydrolysis stage on the ribosome. In Mycobacterium sp. (strain JLS), this protein is Elongation factor Ts.